The sequence spans 297 residues: Glucose-6-phosphate 1-epimerase (297 aa).

The substrate site is built by R57, Q81, and R86. S88 is subject to Phosphoserine. H159 is a catalytic residue. Substrate is bound at residue D203. The active site involves E264.

Belongs to the glucose-6-phosphate 1-epimerase family.

It catalyses the reaction alpha-D-glucose 6-phosphate = beta-D-glucose 6-phosphate. Functionally, catalyzes the interconversion between the alpha and beta anomers from at least three hexose 6-phosphate sugars (Glc6P, Gal6P, and Man6P). This Saccharomyces cerevisiae (strain ATCC 204508 / S288c) (Baker's yeast) protein is Glucose-6-phosphate 1-epimerase.